The following is a 252-amino-acid chain: Receptor expression-enhancing protein 2 (252 aa).

Transmembrane regions (helical) follow at residues 1–21 (MVSW…YPAY) and 35–55 (YVKW…ETLT). Serine 150 is modified (phosphoserine). Residues 165–252 (LQRPDGRLRP…KKTSGGGDSA (88 aa)) are disordered. A compositionally biased stretch (basic and acidic residues) spans 203–217 (SRTEASEDDMGDKAP).

It belongs to the DP1 family. Interacts with odorant receptor proteins. Detected in brain, heart and skeletal muscle, and at low levels in placenta, kidney and pancreas. Expressed in circumvallate papillae.

Its subcellular location is the membrane. Its function is as follows. Required for endoplasmic reticulum (ER) network formation, shaping and remodeling. May enhance the cell surface expression of odorant receptors. In Homo sapiens (Human), this protein is Receptor expression-enhancing protein 2 (REEP2).